The sequence spans 264 residues: Complement C1q tumor necrosis factor-related protein 6 (264 aa).

Positions 1–24 are cleaved as a signal peptide; the sequence is MRVIMGIASLGFLWAVFLLPLVFG. Asn77 is a glycosylation site (N-linked (GlcNAc...) asparagine). Positions 81-125 are disordered; it reads LKGDKGDRGPTGTPGKPGKNGTRGDRGSQGVKGDKGQAGSPGSSC. The 42-residue stretch at 83–124 folds into the Collagen-like domain; that stretch reads GDKGDRGPTGTPGKPGKNGTRGDRGSQGVKGDKGQAGSPGSS. Residues 90–100 are compositionally biased toward low complexity; the sequence is PTGTPGKPGKN. Residues 125–264 form the C1q domain; the sequence is CQTHYSAFSV…SGHLIKAEDN (140 aa).

It localises to the secreted. The chain is Complement C1q tumor necrosis factor-related protein 6 (C1qtnf6) from Mus musculus (Mouse).